A 463-amino-acid chain; its full sequence is Asparagine--tRNA ligase (463 aa).

It belongs to the class-II aminoacyl-tRNA synthetase family. Homodimer.

The protein localises to the cytoplasm. It catalyses the reaction tRNA(Asn) + L-asparagine + ATP = L-asparaginyl-tRNA(Asn) + AMP + diphosphate + H(+). This chain is Asparagine--tRNA ligase, found in Alkaliphilus metalliredigens (strain QYMF).